The primary structure comprises 351 residues: Riboflavin-binding protein RibY (351 aa).

The first 19 residues, 1–19 (MMKLRVLTLGILIILLITA), serve as a signal peptide directing secretion. C20 is lipidated: N-palmitoyl cysteine. C20 is lipidated: S-diacylglycerol cysteine.

Belongs to the NMT1 family. The complex is likely composed of an ATP-binding protein, a transmembrane protein (RibX) and a solute-binding protein (RibY).

Its subcellular location is the cell membrane. Its function is as follows. Part of an ABC transporter complex that transports riboflavin into the cell. Binds riboflavin. The chain is Riboflavin-binding protein RibY from Chloroflexus aurantiacus (strain ATCC 29366 / DSM 635 / J-10-fl).